The following is a 180-amino-acid chain: Large ribosomal subunit protein uL5 (180 aa).

Belongs to the universal ribosomal protein uL5 family. As to quaternary structure, part of the 50S ribosomal subunit; part of the 5S rRNA/L5/L18/L25 subcomplex. Contacts the 5S rRNA and the P site tRNA. Forms a bridge to the 30S subunit in the 70S ribosome.

Its function is as follows. This is one of the proteins that bind and probably mediate the attachment of the 5S RNA into the large ribosomal subunit, where it forms part of the central protuberance. In the 70S ribosome it contacts protein S13 of the 30S subunit (bridge B1b), connecting the 2 subunits; this bridge is implicated in subunit movement. Contacts the P site tRNA; the 5S rRNA and some of its associated proteins might help stabilize positioning of ribosome-bound tRNAs. This is Large ribosomal subunit protein uL5 from Acholeplasma laidlawii (strain PG-8A).